We begin with the raw amino-acid sequence, 66 residues long: MKNKLKYYRALHNLTQEDLAKKLGVSRQTIIAIEKGKYDPSLKLAFKIAKFFGVKIEDIFIYEDDE.

Residues 5–59 (LKYYRALHNLTQEDLAKKLGVSRQTIIAIEKGKYDPSLKLAFKIAKFFGVKIEDI) form the HTH cro/C1-type domain. The H-T-H motif DNA-binding region spans 16–35 (QEDLAKKLGVSRQTIIAIEK).

This is an uncharacterized protein from Methanocaldococcus jannaschii (strain ATCC 43067 / DSM 2661 / JAL-1 / JCM 10045 / NBRC 100440) (Methanococcus jannaschii).